The sequence spans 58 residues: uncharacterized protein (58 aa).

The protein resides in the plastid. The protein localises to the chloroplast. This is an uncharacterized protein from Chlamydomonas reinhardtii (Chlamydomonas smithii).